The primary structure comprises 429 residues: Gamma-glutamyl phosphate reductase (429 aa).

This sequence belongs to the gamma-glutamyl phosphate reductase family.

It is found in the cytoplasm. It carries out the reaction L-glutamate 5-semialdehyde + phosphate + NADP(+) = L-glutamyl 5-phosphate + NADPH + H(+). It participates in amino-acid biosynthesis; L-proline biosynthesis; L-glutamate 5-semialdehyde from L-glutamate: step 2/2. Functionally, catalyzes the NADPH-dependent reduction of L-glutamate 5-phosphate into L-glutamate 5-semialdehyde and phosphate. The product spontaneously undergoes cyclization to form 1-pyrroline-5-carboxylate. The polypeptide is Gamma-glutamyl phosphate reductase (Rhizorhabdus wittichii (strain DSM 6014 / CCUG 31198 / JCM 15750 / NBRC 105917 / EY 4224 / RW1) (Sphingomonas wittichii)).